Reading from the N-terminus, the 221-residue chain is Octanoyltransferase (221 aa).

In terms of domain architecture, BPL/LPL catalytic spans 35 to 221 (ESYENRIIFC…RELLAALLSK (187 aa)). Residues 80 to 87 (RGGDITYH), 152 to 154 (AIG), and 165 to 167 (GLA) each bind substrate. C183 functions as the Acyl-thioester intermediate in the catalytic mechanism.

Belongs to the LipB family.

The protein localises to the cytoplasm. It carries out the reaction octanoyl-[ACP] + L-lysyl-[protein] = N(6)-octanoyl-L-lysyl-[protein] + holo-[ACP] + H(+). Its pathway is protein modification; protein lipoylation via endogenous pathway; protein N(6)-(lipoyl)lysine from octanoyl-[acyl-carrier-protein]: step 1/2. Functionally, catalyzes the transfer of endogenously produced octanoic acid from octanoyl-acyl-carrier-protein onto the lipoyl domains of lipoate-dependent enzymes. Lipoyl-ACP can also act as a substrate although octanoyl-ACP is likely to be the physiological substrate. The chain is Octanoyltransferase from Bacteroides fragilis (strain ATCC 25285 / DSM 2151 / CCUG 4856 / JCM 11019 / LMG 10263 / NCTC 9343 / Onslow / VPI 2553 / EN-2).